Reading from the N-terminus, the 362-residue chain is Class I histocompatibility antigen, Gogo-OKO alpha chain (362 aa).

Positions Met-1–Ala-24 are cleaved as a signal peptide. Residues Gly-25–Gly-114 form an alpha-1 region. Residues Gly-25–Ile-308 are Extracellular-facing. A glycan (N-linked (GlcNAc...) asparagine) is linked at Asn-110. The segment at Gly-115–Thr-206 is alpha-2. Cystine bridges form between Cys-125–Cys-188 and Cys-227–Cys-283. The segment at Asp-207–Trp-298 is alpha-3. One can recognise an Ig-like C1-type domain in the interval Pro-209 to Thr-295. The segment at Glu-299 to Ile-308 is connecting peptide. The chain crosses the membrane as a helical span at residues Val-309–Trp-332. The Cytoplasmic segment spans residues Arg-333–Ala-362. Positions Ser-337–Ala-362 are disordered. Positions Gly-342–Ala-362 are enriched in low complexity.

This sequence belongs to the MHC class I family. Heterodimer of an alpha chain and a beta chain (beta-2-microglobulin).

Its subcellular location is the membrane. Involved in the presentation of foreign antigens to the immune system. This Gorilla gorilla gorilla (Western lowland gorilla) protein is Class I histocompatibility antigen, Gogo-OKO alpha chain.